The chain runs to 432 residues: 7-dehydrocholesterol reductase (432 aa).

A run of 9 helical transmembrane segments spans residues 12–34 (YASMLSLLAFCPPFVILLWYTMV), 64–86 (LIAWKIIFCYGAFEAILQLLLPG), 107–126 (LAAYFVTLATYLGLWWFGIF), 136–155 (GEIFSALIFGSFIFCVLLYI), 195–212 (FTNCRFGMMSWAVLAVTY), 227–249 (MLVNTILMLVYVTKFFWWEAGYW), 261–283 (FYICWGCLVWVPSVYTSPGMYLV), 287–309 (VELGTQLAIYILVAGILCIYINY), and 371–393 (SAFFWTVPALFDNFLAYFYVIFL).

Belongs to the ERG4/ERG24 family.

The protein resides in the endoplasmic reticulum membrane. It carries out the reaction cholesterol + NADP(+) = 7-dehydrocholesterol + NADPH + H(+). It functions in the pathway lipid metabolism; steroid biosynthesis. Functionally, production of cholesterol by reduction of C7-C8 double bond of 7-dehydrocholesterol (7-DHC). Lesions in the gene coding for the enzyme cause dwarfism. The polypeptide is 7-dehydrocholesterol reductase (DWF5) (Arabidopsis thaliana (Mouse-ear cress)).